Consider the following 248-residue polypeptide: PACRG-like protein (248 aa).

Residue M1 is modified to N-acetylmethionine. The tract at residues 1–72 (MQRSECSGGV…NPKTINPFGE (72 aa)) is disordered. Polar residues-rich tracts occupy residues 14–29 (NRAT…SSTQ) and 36–45 (VQRSKSSSLT). Position 47 is a phosphoserine (S47).

This is PACRG-like protein (Pacrgl) from Mus musculus (Mouse).